We begin with the raw amino-acid sequence, 2333 residues long: MNTTNCFIALVHAIREIRAFFLSRATGKMEFTLYNGERKTFYSRPNNHDNCWLNTILQLFRYVDEPFFDWVYNSPENLTLAAIKQLEELTGLELHEGGPPALVIWNIKHLLQTGIGTASRPSEVCMVDGTDMCLADFHAGIFLKGQEHAVFACVTSNGWYAIDDEDFYPWTPDPSDVLVFVPYDQEPLNGGWKANVQRKLKGAGQSSPATGSQNQSGNTGSIINNYYMQQYQNSMDTQLGDNAISGGSNEGSTDTTSTHTTNTQNNDWFSKLASSAFTGLFGALLADKKTEETTLLEDRILTTRNGHTTSTTQSSVGVTYGYSTEEDHVAGPNTSGLETRVVQAERFFKKFLFDWTTDKPFGHLEKLELPTDHHGVFGHLVDSYAYMRNGWDVEVSAVGNQFNGGCLLVAMVPEWKEFDKREKYQLTLFPHQFISPRTNMTAHITVPYLGVNRYDQYKKHKPWTLVIMVVSPLTVSNTAATQIKVYANIAPTYVHVAGELPSKEGIFPVACSDGYGGLVTTDPKTADPVYGKVYNPPRTNYPGRFTNLLDVAEACPTFLCFDDGKPYVVTRTDDTRLLAKFDVSLAAKHMSNTYLSGIAQYYTQYSGTINLHFMFTGSTDSKARYMVAYIPPGVETPPETPEGAAHCIHAEWDTGLNSKFTFSIPYVSAADYAYTASDTAETTNVQGWVCIYQITHGKAEGDTLVVSASAGKDFELRLPIDPRSQTTATGESADPVTTTVENYGGETQVQRRHHTDVSFIMDRFVKIKSLNPTHVIDLMQTHQHGLVGALLRAATYYFSDLEIVVRHDGNLTWVPNGAPEAALSNTGNPTAYNKAPFTRLALPYTAPHRVLATVYNGTNKYSASGSGVRGDSGSLAPRVARQLPASFNYGAIKAETIHELLVRMKRAELYCPRPLLAIEVSSQDRHKQKIIAPGKQLLNFDLLKLAGDVESNPGPFFFADVRSNFSKLVDTINQMQEDMSTKHGPDFNRLVSAFEELATGVKAIRTGLDEAKPWYKLIKLLSRLSCMAAVAARSKDPVLVAIMLADTGLEILDSTFVVKKISDSLSSLFHVPAPVFSFGAPVLLAGLVKVASSFFRSTPEDLERAEKQLKARDINDIFAILKNGEWLVKLILAIRDWIKAWIASEEKFVTTTDLVPGILEKQRDLNDPSKYKEAKEWLDNARQACLKSGNVHIANLCKVVAPAPSKSRPEPVVVCLRGKSGQGKSFLANVLAQAISTHFTGRTDSVWYCPPDPDHFDGYNQQTVVVMDDLGQNPDGKDFKYFAQMVSTTGFIPPMASLEDKGKPFNSKVIIATTNLYSGFTPRTMVCPDALNRRFHFDIDVSAKDGYKINNKLDIIKALEDTHTNPVAMFQYDCALLNGMAVEMKRMQQDMFKPQPPLQNVYQLVQEVIERVELHEKVSSHPIFKQISIPSQKSVLYFLIEKGQHEAAIEFFEGMVHDSIKEELRPLIQQTSFVKRAFKRLKENFEIVALCLTLLANIVIMIRETRKRQKMVDDAVNEYIEKANITTDDTTLDEAEKNPLETSGASTVGFRERTLTGQRACNDVNSEPARPAEEQPQAEGPYTGPLERQRPLKVRAKLPQQEGPYAGPLERQKPLKVKAKAPVVKEGPYEGPVKKPVALKVKAKNLIVTESGAPPTDLQKMVMGNTKPVELILDGKTVAICCATGVFGTAYLVPRHLFAEKYDKIMLDGRAMTDSDYRVFEFEIKVKGQDMLSDAALMVLHRGNRVRDITKHFRDTARMKKGTPVVGVVNNADVGRLIFSGEALTYKDIVVCMDGDTMPGLFAYKAATKAGYCGGAVLAKDGADTFIVGTHSAGGNGVGYCSCVSRSMLLRMKAHVDPEPHHEGLIVDTRDVEERVHVMRKTKLAPTVAHGVFNPEFGPAALSNKDPRLNEGVVLDEVIFSKHKGDTKMSAEDKALFRRCAADYASRLHSVLGTANAPLSIYEAIKGVDGLDAMESDTAPGLPWAFQGKRRGALIDFENGTVGPEVEAALKLMEKREYKFACQTFLKDEIRPMEKVRAGKTRIVDVLPVEHILYTRMMIGRFCAQMHSNNGPQIGSAVGCNPDVDWQRFGTHFAQYRNVWDVDYSAFDANHCSDAMNIMFEEVFRTDFGFHPNAEWILKTLVNTEHAYENKRITVEGGMPSGCSATSIINTILNNIYVLYALRRHYEGVELDTYTMISYGDDIVVASDYDLDFEALKPHFKSLGQTITPADKSDKGFVLGHSITDVTFLKRHFHIDYGTGFYKPVMASKTLEAILSFARRGTIQEKLTSVAGLAVHSGPDEYRRLFEPFQGLFEIPSYRSLYLRWVNAVCGDA.

One can recognise a Peptidase C28 domain in the interval methionine 1–lysine 201. The Cytoplasmic segment spans residues methionine 1–leucine 1481. Catalysis depends on for leader protease activity residues cysteine 51, histidine 148, and aspartate 163. Disordered regions lie at residues lysine 199 to asparagine 218 and glutamine 238 to asparagine 265. Glycine 202 carries N-myristoyl glycine; by host lipidation. Composition is skewed to polar residues over residues glycine 204 to asparagine 218 and glutamine 238 to glycine 251. Residues serine 252–asparagine 265 are compositionally biased toward low complexity. The tract at residues alanine 789–tyrosine 797 is antigenic epitope. The Cell attachment site motif lies at arginine 869–aspartate 871. The SF3 helicase domain occupies asparagine 1190–aspartate 1354. Glycine 1218–serine 1225 contacts ATP. An intramembrane segment occupies lysine 1482 to isoleucine 1502. Residues arginine 1503–alanine 2333 are Cytoplasmic-facing. Residues asparagine 1562–glutamine 1589 are disordered. 3 positions are modified to O-(5'-phospho-RNA)-tyrosine: tyrosine 1582, tyrosine 1605, and tyrosine 1629. Positions alanine 1653–leucine 1849 constitute a Peptidase C3 domain. Histidine 1696 functions as the For protease 3C activity; Proton donor/acceptor in the catalytic mechanism. Active-site for protease 3C activity residues include aspartate 1734 and cysteine 1813. The Nuclear localization signal motif lies at methionine 1879–threonine 1887. The region spanning arginine 2097–alanine 2215 is the RdRp catalytic domain. Residue glycine 2200 is the For RdRp activity of the active site.

The protein belongs to the picornaviruses polyprotein family. As to quaternary structure, interacts with host ISG15. In terms of assembly, interacts (via R-G-D motif) with host ITGAV/ITGB6. Interacts with host MAVS; this interaction inhibits binding of host TRAF3 to MAVS, thereby suppressing interferon-mediated responses. Forms homooligomers. As to quaternary structure, homohexamer. Interacts with host VIM. Interacts with host BECN1. In terms of assembly, interacts with host DCTN3. Interacts with RNA-dependent RNA polymerase; this interaction allows 3B-1 to binds 2 polymerases and act as a primer. It also allows the recruitment of the RNA-dependent RNA polymerase to host membranes. As to quaternary structure, interacts with RNA-dependent RNA polymerase; this interaction allows 3B-2 to act as a primer. In terms of assembly, interacts with RNA-dependent RNA polymerase; this interaction allows 3B-3 to act as a primer. Interacts with 3B-1; this interaction allows 3B-1 to binds 2 polymerases and act as a primer. It also allows the recruitment of the RNA-dependent RNA polymerase to host membranes. Interacts with 3B-2; this interaction allows 3B-2 to act as a primer. Interacts with 3B-3; this interaction allows 3B-3 to act as a primer. In terms of processing, removes six residues from its own C-terminus, generating sLb(pro). Specific enzymatic cleavages in vivo by the viral proteases yield a variety of precursors and mature proteins. The polyprotein seems to be cotranslationally cleaved at the 2A/2B junction by a ribosomal skip from one codon to the next without formation of a peptide bond. This process would release the L-P1-2A peptide from the translational complex. Post-translationally, during virion maturation, immature virions are rendered infectious following cleavage of VP0 into VP4 and VP2. This maturation seems to be an autocatalytic event triggered by the presence of RNA in the capsid and is followed by a conformational change of the particle. In terms of processing, myristoylation is required during RNA encapsidation and formation of the mature virus particle. Uridylylated by the polymerase and covalently linked to the 5'-end of genomic RNA. These uridylylated forms act as a nucleotide-peptide primer for the polymerase.

It is found in the host nucleus. The protein resides in the host cytoplasm. It localises to the virion. Its subcellular location is the host endoplasmic reticulum membrane. The protein localises to the host cytoplasmic vesicle membrane. The catalysed reaction is Autocatalytically cleaves itself from the polyprotein of the foot-and-mouth disease virus by hydrolysis of a Lys-|-Gly bond, but then cleaves host cell initiation factor eIF-4G at bonds -Gly-|-Arg- and -Lys-|-Arg-.. It carries out the reaction a ribonucleoside 5'-triphosphate + H2O = a ribonucleoside 5'-diphosphate + phosphate + H(+). The enzyme catalyses RNA(n) + a ribonucleoside 5'-triphosphate = RNA(n+1) + diphosphate. It catalyses the reaction Selective cleavage of Gln-|-Gly bond in the poliovirus polyprotein. In other picornavirus reactions Glu may be substituted for Gln, and Ser or Thr for Gly.. Autocatalytically cleaves itself from the polyprotein at the L/VP0 junction. Also cleaves the host translation initiation factors EIF4G1 and EIF4G3, in order to shut off the capped cellular mRNA transcription. Plays a role in counteracting host innate antiviral response using diverse mechanisms. Possesses a deubiquitinase activity acting on both 'Lys-48' and 'Lys-63'-linked polyubiquitin chains. In turn, inhibits the ubiquitination and subsequent activation of key signaling molecules of type I IFN response such as host RIGI, TBK1, TRAF3 and TRAF6. Inhibits host NF-kappa-B activity by inducing a decrease in RELA mRNA levels. Cleaves a peptide bond in the C-terminus of host ISG15, resulting in the damaging of this modifier that can no longer be attached to target proteins. Also cleaves host G3BP1 and G3BP2 in order to inhibit cytoplasmic stress granules assembly. In terms of biological role, lies on the inner surface of the capsid shell. After binding to the host receptor, the capsid undergoes conformational changes. Capsid protein VP4 is released, capsid protein VP1 N-terminus is externalized, and together, they shape a pore in the host membrane through which the viral genome is translocated into the host cell cytoplasm. After genome has been released, the channel shrinks. Functionally, forms an icosahedral capsid of pseudo T=3 symmetry with capsid proteins VP1 and VP3. The capsid is composed of 60 copies of each capsid protein organized in the form of twelve pentamers and encloses the viral positive strand RNA genome. Upon acidifcation in the endosome, dissociates into pentamers. Its function is as follows. Forms an icosahedral capsid of pseudo T=3 symmetry with capsid proteins VP0 and VP3. The capsid is composed of 60 copies of each capsid protein organized in the form of twelve pentamers and encloses the viral positive strand RNA genome. Upon acidifcation in the endosome, dissociates into pentamers. Forms an icosahedral capsid of pseudo T=3 symmetry with capsid proteins VP2 and VP3. The capsid is composed of 60 copies of each capsid protein organized in the form of twelve pentamers and encloses the viral positive strand RNA genome. Mediates cell entry by attachment to an integrin receptor, usually host ITGAV/ITGB6. In addition, targets host MAVS to suppress type I IFN pathway. Upon acidifcation in the endosome, dissociates into pentamers. In terms of biological role, mediates self-processing of the polyprotein by a translational effect termed 'ribosome skipping'. Mechanistically, 2A-mediated cleavage occurs between the C-terminal glycine and the proline of the downstream protein 2B. In the case of foot-and-mouth disease virus, the 2A oligopeptide is post-translationally 'trimmed' from the C-terminus of the upstream protein 1D by 3C proteinase. Functionally, plays an essential role in the virus replication cycle by acting as a viroporin. Creates a pore in the host endoplasmic reticulum and as a consequence releases Ca2+ in the cytoplasm of infected cell. In turn, high levels of cytoplasmic calcium may trigger membrane trafficking and transport of viral ER-associated proteins to viroplasms, sites of viral genome replication. Its function is as follows. Associates with and induces structural rearrangements of intracellular membranes. Triggers host autophagy by interacting with host BECN1 and thereby promotes viral replication. Participates in viral replication and interacts with host DHX9. Displays RNA-binding, nucleotide binding and NTPase activities. May play a role in virion morphogenesis and viral RNA encapsidation by interacting with the capsid protein VP3. Plays important roles in virus replication, virulence and host range. In terms of biological role, covalently linked to the 5'-end of both the positive-strand and negative-strand genomic RNAs. Acts as a genome-linked replication primer. Functionally, cysteine protease that generates mature viral proteins from the precursor polyprotein. In addition to its proteolytic activity, binds to viral RNA and thus influences viral genome replication. RNA and substrate bind cooperatively to the protease. Its function is as follows. RNA-directed RNA polymerase 3D-POL replicates genomic and antigenomic RNA by recognizing replications specific signals. Covalently attaches UMP to a tyrosine of VPg, which is used to prime RNA synthesis. The positive stranded RNA genome is first replicated at virus induced membranous vesicles, creating a dsRNA genomic replication form. This dsRNA is then used as template to synthesize positive stranded RNA genomes. ss(+)RNA genomes are either translated, replicated or encapsidated. The polypeptide is Genome polyprotein (Foot-and-mouth disease virus (isolate Bovine/United Kingdom/A12Valle119/1932 serotype A) (FMDV)).